Reading from the N-terminus, the 243-residue chain is DNA repair protein RecO (243 aa).

The protein belongs to the RecO family.

Functionally, involved in DNA repair and RecF pathway recombination. This chain is DNA repair protein RecO, found in Frankia casuarinae (strain DSM 45818 / CECT 9043 / HFP020203 / CcI3).